Consider the following 207-residue polypeptide: Superoxide dismutase [Mn] (207 aa).

4 residues coordinate Mn(2+): His27, His82, Asp169, and His173.

This sequence belongs to the iron/manganese superoxide dismutase family. Requires Mn(2+) as cofactor.

The catalysed reaction is 2 superoxide + 2 H(+) = H2O2 + O2. In terms of biological role, destroys superoxide anion radicals which are normally produced within the cells and which are toxic to biological systems. In Yersinia enterocolitica, this protein is Superoxide dismutase [Mn] (sodA).